Reading from the N-terminus, the 355-residue chain is WAT1-related protein At1g25270 (355 aa).

10 helical membrane passes run 4-24 (VVAM…FKIT), 33-53 (VLVA…ALIF), 65-85 (LLLL…ILYL), 94-114 (TFSA…GLVF), 134-154 (LLGA…IHIW), 175-195 (VSIL…LWLL), 207-227 (LYWN…IIAL), 244-264 (LLAT…LVAW), 272-292 (LFVT…GSFA), and 297-317 (LHLG…LVVW). Positions 12–142 (FIFAGMFILF…TLLGACGALV (131 aa)) constitute an EamA 1 domain. In terms of domain architecture, EamA 2 spans 210-316 (NTSLMNGVGS…IMVGGVYLVV (107 aa)).

This sequence belongs to the drug/metabolite transporter (DMT) superfamily. Plant drug/metabolite exporter (P-DME) (TC 2.A.7.4) family.

Its subcellular location is the membrane. The sequence is that of WAT1-related protein At1g25270 from Arabidopsis thaliana (Mouse-ear cress).